The primary structure comprises 502 residues: Hexose transporter 1 (502 aa).

Topologically, residues Met-1–Ser-26 are cytoplasmic. Residues Leu-27–Leu-47 form a helical membrane-spanning segment. Topologically, residues Asn-48–Ser-76 are extracellular. A disulfide bridge connects residues Cys-61 and Cys-68. Residues Phe-77–Val-97 form a helical membrane-spanning segment. The Cytoplasmic portion of the chain corresponds to Gln-98–Arg-102. The helical transmembrane segment at Phe-103–His-123 threads the bilayer. Topologically, residues His-124–Arg-132 are extracellular. The chain crosses the membrane as a helical span at residues Leu-133 to Met-153. At Thr-154 to Gly-163 the chain is on the cytoplasmic side. Residues Val-164–Met-184 traverse the membrane as a helical segment. An alpha-D-glucose-binding site is contributed by Gln-167. Gln-167 contacts beta-D-glucose. The Extracellular segment spans residues Gly-185–Arg-205. A helical membrane pass occupies residues Leu-206–Tyr-226. Residues Lys-227 to Asn-291 lie on the Cytoplasmic side of the membrane. A helical transmembrane segment spans residues Val-292 to Val-312. Alpha-D-glucose-binding residues include Gln-303, Gln-304, and Asn-309. Gln-303 serves as a coordination point for beta-D-glucose. Asn-309 is a beta-D-glucose binding site. Topologically, residues Ser-313–Thr-329 are extracellular. Residues Thr-330 to Val-350 traverse the membrane as a helical segment. Asn-339 contacts beta-D-glucose. Residues Glu-351–Lys-356 lie on the Cytoplasmic side of the membrane. The helical transmembrane segment at Thr-357–Asn-377 threads the bilayer. At Gln-378 to Ser-390 the chain is on the extracellular side. Residues Ile-391–Ile-411 form a helical membrane-spanning segment. An alpha-D-glucose-binding site is contributed by Trp-410. Residues Tyr-412 to Ser-427 are Cytoplasmic-facing. Residues Leu-428–Ile-448 form a helical membrane-spanning segment. At Lys-449–Thr-453 the chain is on the extracellular side. Residues Ile-454 to Ile-474 form a helical membrane-spanning segment. The Cytoplasmic segment spans residues Lys-475–Val-502.

The protein belongs to the major facilitator superfamily. Sugar transporter (TC 2.A.1.1) family. Homodimer.

Its subcellular location is the cell membrane. The enzyme catalyses D-glucose(out) = D-glucose(in). It catalyses the reaction D-fructose(out) = D-fructose(in). It carries out the reaction D-galactose(in) = D-galactose(out). The catalysed reaction is D-mannose(out) = D-mannose(in). The enzyme catalyses D-glucosamine(out) = D-glucosamine(in). It catalyses the reaction D-xylose(out) = D-xylose(in). Inhibited by compound 3361 (3-O-((undec-10-en)-1-yl)-D-glucose). In terms of biological role, sodium-independent facilitative hexose transporter. Can transport D-glucose and D-fructose. Can transport D-mannose, D-galactose, D-xylose and D-glucosamine. The chain is Hexose transporter 1 from Plasmodium vivax (strain Brazil I).